The following is a 328-amino-acid chain: Lactamase-like protein nscB (328 aa).

Zn(2+)-binding residues include histidine 97, histidine 99, aspartate 101, and histidine 102. Residue aspartate 101 is the Proton donor/acceptor of the active site.

It belongs to the metallo-beta-lactamase superfamily. Zn(2+) is required as a cofactor.

Its pathway is secondary metabolite biosynthesis. Functionally, lactamase-like protein; part of the gene cluster that mediates the biosynthesis of neosartoricin, a prenylated anthracenone that exhibits T-cell antiproliferative activity, suggestive of a physiological role as an immunosuppressive agent. The non-reducing polyketide synthase nscA probably synthesizes and cyclizes the decaketide backbone. The hydrolase nscB then mediates the product release through hydrolysis followed by spontaneous decarboxylation. The prenyltransferase nscD catalyzes the addition of the dimethylallyl group to the aromatic C5. The FAD-dependent monooxygenase nscC is then responsible for the stereospecific hydroxylation at C2. There is no gene encoding O-acetyltransferase in the nsc gene cluster; thus, the last step of 2-O-acetylation leading to neosartoricin may be catalyzed by an unidentified O-acetyltransferase. In Neosartorya fischeri (strain ATCC 1020 / DSM 3700 / CBS 544.65 / FGSC A1164 / JCM 1740 / NRRL 181 / WB 181) (Aspergillus fischerianus), this protein is Lactamase-like protein nscB.